The following is a 234-amino-acid chain: Enolase-phosphatase E1 (234 aa).

Residues Asp13 and Glu15 each contribute to the Mg(2+) site. Substrate is bound by residues 127 to 128 and Lys164; that span reads SS. Asp191 is a Mg(2+) binding site.

The protein belongs to the HAD-like hydrolase superfamily. MasA/MtnC family. As to quaternary structure, monomer. The cofactor is Mg(2+).

The protein localises to the cytoplasm. The protein resides in the nucleus. The enzyme catalyses 5-methylsulfanyl-2,3-dioxopentyl phosphate + H2O = 1,2-dihydroxy-5-(methylsulfanyl)pent-1-en-3-one + phosphate. It functions in the pathway amino-acid biosynthesis; L-methionine biosynthesis via salvage pathway; L-methionine from S-methyl-5-thio-alpha-D-ribose 1-phosphate: step 3/6. The protein operates within amino-acid biosynthesis; L-methionine biosynthesis via salvage pathway; L-methionine from S-methyl-5-thio-alpha-D-ribose 1-phosphate: step 4/6. Bifunctional enzyme that catalyzes the enolization of 2,3-diketo-5-methylthiopentyl-1-phosphate (DK-MTP-1-P) into the intermediate 2-hydroxy-3-keto-5-methylthiopentenyl-1-phosphate (HK-MTPenyl-1-P), which is then dephosphorylated to form the acireductone 1,2-dihydroxy-3-keto-5-methylthiopentene (DHK-MTPene). This is Enolase-phosphatase E1 from Podospora anserina (strain S / ATCC MYA-4624 / DSM 980 / FGSC 10383) (Pleurage anserina).